We begin with the raw amino-acid sequence, 159 residues long: Phosphopantetheine adenylyltransferase (159 aa).

Residue Thr-10 coordinates substrate. Residues 10 to 11 (TF) and His-18 each bind ATP. Substrate-binding residues include Lys-42, Met-74, and Arg-88. Residues 89–91 (GLR), Glu-99, and 124–130 (WSFISSS) each bind ATP.

This sequence belongs to the bacterial CoaD family. In terms of assembly, homohexamer. Mg(2+) is required as a cofactor.

It localises to the cytoplasm. The enzyme catalyses (R)-4'-phosphopantetheine + ATP + H(+) = 3'-dephospho-CoA + diphosphate. It functions in the pathway cofactor biosynthesis; coenzyme A biosynthesis; CoA from (R)-pantothenate: step 4/5. Its function is as follows. Reversibly transfers an adenylyl group from ATP to 4'-phosphopantetheine, yielding dephospho-CoA (dPCoA) and pyrophosphate. The chain is Phosphopantetheine adenylyltransferase from Salmonella paratyphi A (strain ATCC 9150 / SARB42).